The following is a 457-amino-acid chain: Multidrug resistance protein MdtK (457 aa).

A run of 12 helical transmembrane segments spans residues 11–31 (LLAL…MGFV), 53–73 (IWLP…PVVA), 93–113 (WLAG…GYII), 127–147 (AVGY…FQVA), 160–180 (GMVM…IFIY), 191–211 (VGCG…MLWW), 243–263 (LPIA…ALLV), 276–296 (IALN…AAVT), 316–336 (RTGV…TVLM), 357–377 (LMLL…GSGI), 387–407 (IFFI…YLLA), and 418–438 (PAGF…MMML).

It belongs to the multi antimicrobial extrusion (MATE) (TC 2.A.66.1) family. MdtK subfamily.

It is found in the cell inner membrane. Its function is as follows. Multidrug efflux pump that functions probably as a Na(+)/drug antiporter. The polypeptide is Multidrug resistance protein MdtK (Klebsiella pneumoniae subsp. pneumoniae (strain ATCC 700721 / MGH 78578)).